Reading from the N-terminus, the 199-residue chain is CASP-like protein 1D2 (199 aa).

A disordered region spans residues Met-1–Ser-27. Ala-2 is subject to N-acetylalanine. At Ala-2–Lys-36 the chain is on the cytoplasmic side. Residues Ile-37 to Val-57 traverse the membrane as a helical segment. Topologically, residues Thr-58–Ala-85 are extracellular. Residues Phe-86 to Val-106 form a helical membrane-spanning segment. Residues Ser-107–Met-129 lie on the Cytoplasmic side of the membrane. A helical transmembrane segment spans residues Val-130–Leu-150. Residues Lys-151–Tyr-171 lie on the Extracellular side of the membrane. A helical transmembrane segment spans residues Ile-172–Trp-192. Topologically, residues Ser-193–Thr-199 are cytoplasmic.

Belongs to the Casparian strip membrane proteins (CASP) family. As to quaternary structure, homodimer and heterodimers. As to expression, expressed in the root endodermis and flowers.

Its subcellular location is the cell membrane. This chain is CASP-like protein 1D2, found in Arabidopsis thaliana (Mouse-ear cress).